A 200-amino-acid polypeptide reads, in one-letter code: Lipopolysaccharide core heptose(II)-phosphate phosphatase (200 aa).

A signal peptide spans 1–25; the sequence is MLAFCRSSLKSKKYFIILLALAAIA.

This sequence belongs to the phosphoglycerate mutase family. Ais subfamily.

The protein resides in the periplasm. It functions in the pathway bacterial outer membrane biogenesis; lipopolysaccharide metabolism. In terms of biological role, catalyzes the dephosphorylation of heptose(II) of the outer membrane lipopolysaccharide core. The protein is Lipopolysaccharide core heptose(II)-phosphate phosphatase of Escherichia coli O6:H1 (strain CFT073 / ATCC 700928 / UPEC).